Here is a 644-residue protein sequence, read N- to C-terminus: Exoribonuclease 2 (644 aa).

The RNB domain maps to 189 to 516 (REDLTALDFV…NHRLLKAVIK (328 aa)). Residues 561-643 (DTRFAAEIVD…ETRSIIARPV (83 aa)) form the S1 motif domain.

The protein belongs to the RNR ribonuclease family. RNase II subfamily.

The protein localises to the cytoplasm. It catalyses the reaction Exonucleolytic cleavage in the 3'- to 5'-direction to yield nucleoside 5'-phosphates.. Functionally, involved in mRNA degradation. Hydrolyzes single-stranded polyribonucleotides processively in the 3' to 5' direction. This chain is Exoribonuclease 2, found in Escherichia coli (strain UTI89 / UPEC).